A 332-amino-acid chain; its full sequence is L-lactate dehydrogenase A chain (332 aa).

Residues 29-57 (GMVG…MEDK) and arginine 99 each bind NAD(+). Residues arginine 106, asparagine 138, and arginine 169 each coordinate substrate. Residue asparagine 138 participates in NAD(+) binding. Histidine 193 serves as the catalytic Proton acceptor. Substrate is bound at residue threonine 248.

This sequence belongs to the LDH/MDH superfamily. LDH family. In terms of assembly, homotetramer.

The protein resides in the cytoplasm. It catalyses the reaction (S)-lactate + NAD(+) = pyruvate + NADH + H(+). The protein operates within fermentation; pyruvate fermentation to lactate; (S)-lactate from pyruvate: step 1/1. Its function is as follows. Interconverts simultaneously and stereospecifically pyruvate and lactate with concomitant interconversion of NADH and NAD(+). The sequence is that of L-lactate dehydrogenase A chain (ldha) from Rhinogobiops nicholsii (Blackeye goby).